A 747-amino-acid chain; its full sequence is Rho GTPase-activating protein 24 (747 aa).

Disordered regions lie at residues 1–20 (MEER…KNTK) and 327–475 (FPKD…GTHS). Residues 17–123 (KNTKCGWLRK…WVKSIRRVIW (107 aa)) enclose the PH domain. The Rho-GAP domain maps to 133–327 (QKLEDTVRYE…VMISKHDRLF (195 aa)). 2 stretches are compositionally biased toward polar residues: residues 334 to 346 (QSKP…SNNN) and 355 to 367 (GQLQ…NTKE). Ser368, Ser390, Ser395, Ser397, Ser401, Ser412, Ser414, and Ser436 each carry phosphoserine. Over residues 368-380 (SPVRRCSWDKPES) the composition is skewed to basic and acidic residues. Residues 381–404 (PQRSSVDNGSPTALSGSKTNSPRN) are compositionally biased toward polar residues. Residues 431 to 475 (IVTNGSFSSSNAEGVEKPQTTPNGSLQARRTSSLKSSGTKMGTHS) are compositionally biased toward polar residues. At Thr451 the chain carries Phosphothreonine. At Ser494 the chain carries Phosphoserine. The disordered stretch occupies residues 581–639 (DFYVGNFEDPVLDGPPQDDLSHPGDYENKSDRRSVGGRSSRATSSSDNSETFVGNTSSN). Positions 599–614 (DLSHPGDYENKSDRRS) are enriched in basic and acidic residues. Low complexity predominate over residues 616-629 (GGRSSRATSSSDNS). Over residues 630–639 (ETFVGNTSSN) the composition is skewed to polar residues. Residues 648–728 (SSLKQEMTKQ…KEMEQFFSTF (81 aa)) adopt a coiled-coil conformation.

As to quaternary structure, interacts with FLNA. In terms of processing, phosphorylated by ROCK, leading to activate the RacGAP activity.

Its subcellular location is the cytoplasm. The protein resides in the cytoskeleton. It localises to the cell junction. It is found in the adherens junction. The protein localises to the focal adhesion. Its subcellular location is the cell projection. Its function is as follows. Rho GTPase-activating protein involved in cell polarity, cell morphology and cytoskeletal organization. Acts as a GTPase activator for the Rac-type GTPase by converting it to an inactive GDP-bound state. Controls actin remodeling by inactivating Rac downstream of Rho leading to suppress leading edge protrusion and promotes cell retraction to achieve cellular polarity. Able to suppress RAC1 and CDC42 activity in vitro. Overexpression induces cell rounding with partial or complete disruption of actin stress fibers and formation of membrane ruffles, lamellipodia, and filopodia. Isoform 2 is a vascular cell-specific GAP involved in modulation of angiogenesis. In Mus musculus (Mouse), this protein is Rho GTPase-activating protein 24 (Arhgap24).